A 166-amino-acid polypeptide reads, in one-letter code: EndA-like protein (166 aa).

This sequence belongs to the tRNA-intron endonuclease family. Archaeal short subfamily.

This is EndA-like protein from Methanopyrus kandleri (strain AV19 / DSM 6324 / JCM 9639 / NBRC 100938).